The primary structure comprises 146 residues: Prepilin peptidase-dependent protein D (146 aa).

Positions 1-6 (MDKQRG) are cleaved as a propeptide — leader sequence. The residue at position 7 (phenylalanine 7) is an N-methylphenylalanine. The chain crosses the membrane as a helical span at residues 7 to 27 (FTLIELMVVIGIIAILSAIGI).

It belongs to the N-Me-Phe pilin family.

The protein localises to the fimbrium. Its subcellular location is the membrane. Its function is as follows. Major component of the type IV pilus (T4P) that plays a role in cell adhesion and motility. Not produced when grown under standard laboratory conditions. The sequence is that of Prepilin peptidase-dependent protein D (ppdD) from Escherichia coli (strain K12).